The chain runs to 393 residues: S-adenosylmethionine synthase (393 aa).

Residue histidine 16 coordinates ATP. Aspartate 18 is a binding site for Mg(2+). Residue glutamate 44 participates in K(+) binding. Glutamate 57 and glutamine 100 together coordinate L-methionine. Positions 100 to 110 (QSNDIAQGVDH) are flexible loop. ATP contacts are provided by residues 167–169 (DAK), 238–239 (RF), aspartate 247, 253–254 (RK), alanine 270, and lysine 274. An L-methionine-binding site is contributed by aspartate 247. L-methionine is bound at residue lysine 278.

The protein belongs to the AdoMet synthase family. In terms of assembly, homotetramer; dimer of dimers. Mg(2+) serves as cofactor. Requires K(+) as cofactor.

The protein localises to the cytoplasm. The catalysed reaction is L-methionine + ATP + H2O = S-adenosyl-L-methionine + phosphate + diphosphate. It functions in the pathway amino-acid biosynthesis; S-adenosyl-L-methionine biosynthesis; S-adenosyl-L-methionine from L-methionine: step 1/1. Functionally, catalyzes the formation of S-adenosylmethionine (AdoMet) from methionine and ATP. The overall synthetic reaction is composed of two sequential steps, AdoMet formation and the subsequent tripolyphosphate hydrolysis which occurs prior to release of AdoMet from the enzyme. The sequence is that of S-adenosylmethionine synthase from Albidiferax ferrireducens (strain ATCC BAA-621 / DSM 15236 / T118) (Rhodoferax ferrireducens).